The following is a 357-amino-acid chain: Hydroxyproline O-arabinosyltransferase RDN1 (357 aa).

Residues 13–33 (LLMLLMVLGFSFATYNLVFMM) traverse the membrane as a helical; Signal-anchor segment.

Expressed in the vasculature of leaves, petioles, stems and roots. Expressed in the vascular cylinder throughout the root, and nodule vasculature.

The protein resides in the golgi apparatus membrane. It catalyses the reaction trans-4-hydroxy-L-prolyl-[protein] + UDP-beta-L-arabinofuranose = O-(beta-L-arabinofuranosyl)-trans-4-hydroxy-L-prolyl-[protein] + UDP + H(+). Functionally, probable glycosyltransferase involved in the O-arabinosylation of several proteins including extensins and small signaling peptides. Catalyzes the transfer of the initial L-arabinose to the hydroxyl group of Hyp residues. Probably involved in the arabinosylation of CLE12, a signaling peptide that moves from root to shoot, to interact with SUNN receptor kinase signaling that regulates nodulation. Involved in long distance nodulation signaling events. Involved in the autoregulation of nodulation (AON), a long distance systemic signaling from root to shoot and back again, which allows legumes to limit the number of root nodules formed based on available nitrogen and previous rhizobial colonization. Functions in the root, upstream of the shoot receptor kinase SUNN and via CLE peptide, to control AON. This is Hydroxyproline O-arabinosyltransferase RDN1 from Medicago truncatula (Barrel medic).